We begin with the raw amino-acid sequence, 466 residues long: Cysteine--tRNA ligase (466 aa).

Cysteine 28 lines the Zn(2+) pocket. The short motif at 30 to 40 is the 'HIGH' region element; sequence PTVYNFFHIGN. Residues cysteine 208, histidine 233, and glutamate 237 each coordinate Zn(2+). The short motif at 265–269 is the 'KMSKS' region element; it reads KMSKS. An ATP-binding site is contributed by lysine 268.

It belongs to the class-I aminoacyl-tRNA synthetase family. As to quaternary structure, monomer. It depends on Zn(2+) as a cofactor.

The protein resides in the cytoplasm. The enzyme catalyses tRNA(Cys) + L-cysteine + ATP = L-cysteinyl-tRNA(Cys) + AMP + diphosphate. In Clostridium perfringens (strain SM101 / Type A), this protein is Cysteine--tRNA ligase.